A 181-amino-acid chain; its full sequence is UPF0302 protein LMOf2365_1950 (181 aa).

This sequence belongs to the UPF0302 family.

The polypeptide is UPF0302 protein LMOf2365_1950 (Listeria monocytogenes serotype 4b (strain F2365)).